The chain runs to 144 residues: HTH-type transcriptional regulator LrpC (144 aa).

In terms of domain architecture, HTH asnC-type spans 3–64; it reads LDQIDLNIIE…EVDQKKLGLP (62 aa). Residues 22 to 41 constitute a DNA-binding region (H-T-H motif); that stretch reads MRELGRKIKLSPPSVTERVR.

Its function is as follows. Transcriptional regulator with a possible role in regulation of amino acid metabolism. Plays a role in the growth phase transition. In Bacillus subtilis (strain 168), this protein is HTH-type transcriptional regulator LrpC (lrpC).